Reading from the N-terminus, the 79-residue chain is D-alanyl carrier protein (79 aa).

A Carrier domain is found at 1–77 (MDVKETILNI…KIISGVVELM (77 aa)). Residue serine 35 is modified to O-(pantetheine 4'-phosphoryl)serine.

Belongs to the DltC family. In terms of processing, 4'-phosphopantetheine is transferred from CoA to a specific serine of apo-DCP.

It is found in the cytoplasm. The protein operates within cell wall biogenesis; lipoteichoic acid biosynthesis. Carrier protein involved in the D-alanylation of lipoteichoic acid (LTA). The loading of thioester-linked D-alanine onto DltC is catalyzed by D-alanine--D-alanyl carrier protein ligase DltA. The DltC-carried D-alanyl group is further transferred to cell membrane phosphatidylglycerol (PG) by forming an ester bond, probably catalyzed by DltD. D-alanylation of LTA plays an important role in modulating the properties of the cell wall in Gram-positive bacteria, influencing the net charge of the cell wall. The protein is D-alanyl carrier protein of Streptococcus suis (strain 05ZYH33).